A 440-amino-acid chain; its full sequence is Xaa-Pro dipeptidase (440 aa).

5 residues coordinate Mn(2+): Asp244, Asp255, His336, Glu381, and Glu420.

Belongs to the peptidase M24B family. Bacterial-type prolidase subfamily. It depends on Mn(2+) as a cofactor.

It catalyses the reaction Xaa-L-Pro dipeptide + H2O = an L-alpha-amino acid + L-proline. Its function is as follows. Splits dipeptides with a prolyl residue in the C-terminal position. This chain is Xaa-Pro dipeptidase, found in Pseudoalteromonas translucida (strain TAC 125).